The chain runs to 465 residues: MDFLPLFHSLQGRLALVVGGGEVALRKARLLADAGARLRVVAPQIHIELRHLVEQGGGELLERDYQDGDQPGCALIIAATDDEPLNAEVSRAANARGIPVNVVDAPALCSVIFPAIVDRSPLVVAVSSGGDAPVLARLIRAKLETWIPSTYGQLAGLASRFRHRVKELLPDLQQRRVFWENLFQGEIAERVLAGRPAEAERLLEEHLAGGLAHIATGEVYLVGAGPGDPDLLTFRALRLMQQADVVLYDRLVAPSILELCRRDAERLYVGKRRAEHAVPQDRINRLLVELASQGKRVLRLKGGDPFIFGRGGEEIDELAAHGIPFQVVPGITAASGCAAYAGIPLTHRDHAQSVRFVTGHLKDGTTDLPWQDLVAPGQTLVFYMGLVGLPVICEQLVAHGRSAQTPAALIQQGTTAQQRVFTGTLENLPQLVAEHEVHAPTLVIVGEVVQLRDKLAWFEGAREDA.

The precorrin-2 dehydrogenase /sirohydrochlorin ferrochelatase stretch occupies residues methionine 1–leucine 203. Residues glutamate 22–valine 23 and proline 43–glutamine 44 contribute to the NAD(+) site. Residue serine 128 is modified to Phosphoserine. Residues glycine 217–alanine 465 are uroporphyrinogen-III C-methyltransferase. Residue proline 226 coordinates S-adenosyl-L-methionine. The active-site Proton acceptor is the aspartate 249. The Proton donor role is filled by lysine 271. Residues glycine 302–aspartate 304, isoleucine 307, threonine 332–alanine 333, methionine 384, and glycine 413 contribute to the S-adenosyl-L-methionine site.

This sequence in the N-terminal section; belongs to the precorrin-2 dehydrogenase / sirohydrochlorin ferrochelatase family. In the C-terminal section; belongs to the precorrin methyltransferase family.

The enzyme catalyses uroporphyrinogen III + 2 S-adenosyl-L-methionine = precorrin-2 + 2 S-adenosyl-L-homocysteine + H(+). It carries out the reaction precorrin-2 + NAD(+) = sirohydrochlorin + NADH + 2 H(+). It catalyses the reaction siroheme + 2 H(+) = sirohydrochlorin + Fe(2+). Its pathway is cofactor biosynthesis; adenosylcobalamin biosynthesis; precorrin-2 from uroporphyrinogen III: step 1/1. The protein operates within cofactor biosynthesis; adenosylcobalamin biosynthesis; sirohydrochlorin from precorrin-2: step 1/1. It participates in porphyrin-containing compound metabolism; siroheme biosynthesis; precorrin-2 from uroporphyrinogen III: step 1/1. It functions in the pathway porphyrin-containing compound metabolism; siroheme biosynthesis; siroheme from sirohydrochlorin: step 1/1. Its pathway is porphyrin-containing compound metabolism; siroheme biosynthesis; sirohydrochlorin from precorrin-2: step 1/1. In terms of biological role, multifunctional enzyme that catalyzes the SAM-dependent methylations of uroporphyrinogen III at position C-2 and C-7 to form precorrin-2 via precorrin-1. Then it catalyzes the NAD-dependent ring dehydrogenation of precorrin-2 to yield sirohydrochlorin. Finally, it catalyzes the ferrochelation of sirohydrochlorin to yield siroheme. This is Siroheme synthase from Pseudomonas aeruginosa (strain ATCC 15692 / DSM 22644 / CIP 104116 / JCM 14847 / LMG 12228 / 1C / PRS 101 / PAO1).